A 390-amino-acid chain; its full sequence is MNGTRNWCTLVDVHPEGQTAGSVDVLRLTLQSELTGDELERIAQKAGRKTYAMVSSHSTSHSLASELVESNDGHEEIIKVYLKGRSGDKMIHEKNINQLKSEVQYIQEARNCLQKLREDISSKLDRDPGDSVHKQEIQVVLEKQNGLSEGPLTTYSSPPEVDTHINEDVESLRKTVQDLLVKLQEAEQQHQSDCSAFKVTLSQYQREAKQSQVALQRAEDRAEQKEAEVGELQRRLQGMETEYQAILAKVREGETALEELRSKNVDCQAEQEKAANLEKEVAGLREKIHHLDDMLKSQQRKVRQMIEQLQNSKAVIQSKDTTIQELKEKIAYLEAENLEMHDRMEHLIEKQISHGNFSTQNRAKTENLGSIRISKPPSPKPMPLIRVVET.

2 coiled-coil regions span residues 88–126 (DKMI…KLDR) and 162–351 (DTHI…IEKQ). Serine 171 is modified (phosphoserine).

This sequence belongs to the tuftelin family. In terms of assembly, interacts with TFIP11. In terms of tissue distribution, present in the extracellular enamel and is mainly associated with the crystal component.

Its subcellular location is the secreted. Functionally, involved in the structural organization of the epidermis. Involved in the mineralization and structural organization of enamel. This Bos taurus (Bovine) protein is Tuftelin (TUFT1).